A 713-amino-acid polypeptide reads, in one-letter code: UvrABC system protein B (713 aa).

Residues 35-421 enclose the Helicase ATP-binding domain; the sequence is RRIRAGEKDV…GDGFVEQIIR (387 aa). An ATP-binding site is contributed by 48 to 55; sequence GATGTGKS. The short motif at 101–124 is the Beta-hairpin element; the sequence is YYDYYQPEAYVPQSDTYIEKDSSI. A Helicase C-terminal domain is found at 438–604; sequence QIDDLVHEIR…PLRKKINDIV (167 aa). The tract at residues 624-663 is disordered; sequence QAKDGKGAKAPVPSLGGKAAAKGAKSAKGKAKETVPTDRP. The segment covering 639 to 649 has biased composition (low complexity); it reads GGKAAAKGAKS. Positions 653–663 are enriched in basic and acidic residues; sequence KAKETVPTDRP. The UVR domain maps to 668-703; the sequence is AEEIEELTNRMRAAAADLQFEIAARLRDEVSEMKKE.

This sequence belongs to the UvrB family. As to quaternary structure, forms a heterotetramer with UvrA during the search for lesions. Interacts with UvrC in an incision complex.

The protein resides in the cytoplasm. In terms of biological role, the UvrABC repair system catalyzes the recognition and processing of DNA lesions. A damage recognition complex composed of 2 UvrA and 2 UvrB subunits scans DNA for abnormalities. Upon binding of the UvrA(2)B(2) complex to a putative damaged site, the DNA wraps around one UvrB monomer. DNA wrap is dependent on ATP binding by UvrB and probably causes local melting of the DNA helix, facilitating insertion of UvrB beta-hairpin between the DNA strands. Then UvrB probes one DNA strand for the presence of a lesion. If a lesion is found the UvrA subunits dissociate and the UvrB-DNA preincision complex is formed. This complex is subsequently bound by UvrC and the second UvrB is released. If no lesion is found, the DNA wraps around the other UvrB subunit that will check the other stand for damage. The sequence is that of UvrABC system protein B from Streptomyces avermitilis (strain ATCC 31267 / DSM 46492 / JCM 5070 / NBRC 14893 / NCIMB 12804 / NRRL 8165 / MA-4680).